A 469-amino-acid polypeptide reads, in one-letter code: ATP synthase subunit beta (469 aa).

ATP is bound at residue 155–162 (GGAGVGKT).

The protein belongs to the ATPase alpha/beta chains family. In terms of assembly, F-type ATPases have 2 components, CF(1) - the catalytic core - and CF(0) - the membrane proton channel. CF(1) has five subunits: alpha(3), beta(3), gamma(1), delta(1), epsilon(1). CF(0) has three main subunits: a(1), b(2) and c(9-12). The alpha and beta chains form an alternating ring which encloses part of the gamma chain. CF(1) is attached to CF(0) by a central stalk formed by the gamma and epsilon chains, while a peripheral stalk is formed by the delta and b chains.

The protein resides in the cell inner membrane. The enzyme catalyses ATP + H2O + 4 H(+)(in) = ADP + phosphate + 5 H(+)(out). In terms of biological role, produces ATP from ADP in the presence of a proton gradient across the membrane. The catalytic sites are hosted primarily by the beta subunits. This Thermosipho melanesiensis (strain DSM 12029 / CIP 104789 / BI429) protein is ATP synthase subunit beta.